A 255-amino-acid polypeptide reads, in one-letter code: Menaquinone reductase, iron-sulfur cluster-binding subunit (255 aa).

4Fe-4S ferredoxin-type domains follow at residues Trp-11–Asp-41, His-66–Glu-97, and Gly-99–Phe-128. Residues Cys-20, Cys-23, Cys-26, Cys-30, Cys-75, Cys-78, Cys-83, Cys-87, Cys-108, Cys-111, Cys-114, and Cys-118 each coordinate [4Fe-4S] cluster. Residues Cys-155, Cys-158, Cys-188, and Cys-192 each coordinate [3Fe-4S] cluster.

The Qrc complex is composed of four subunits: QrcA, QrcB, QrcC and QrcD. Can form a supercomplex with the [NiFe] hydrogenase HynA1 and the tetraheme Type I cytochrome c3 TpIc(3), its physiological electron donors. It depends on [4Fe-4S] cluster as a cofactor. [3Fe-4S] cluster serves as cofactor.

It is found in the periplasm. Component of the respiratory Qrc complex, that catalyzes the reduction of the menaquinone pool using electrons transferred from the reduced periplasmic cytochrome c3, and which is probably involved in sulfate respiration. Is likely essential for growth on H(2) or formate since the periplasmic hydrogenases and/or formate dehydrogenases act as primary electron donors for the Qrc complex. QrcC is an electron-transferring subunit; its cubane iron sulfur clusters form a pathway for electron transfer between the hemes of QrcA and the membrane quinone pool. The chain is Menaquinone reductase, iron-sulfur cluster-binding subunit from Nitratidesulfovibrio vulgaris (strain ATCC 29579 / DSM 644 / CCUG 34227 / NCIMB 8303 / VKM B-1760 / Hildenborough) (Desulfovibrio vulgaris).